The sequence spans 435 residues: Methylenetetrahydrofolate--tRNA-(uracil-5-)-methyltransferase TrmFO (435 aa).

9-14 is an FAD binding site; that stretch reads GGGLAG.

This sequence belongs to the MnmG family. TrmFO subfamily. It depends on FAD as a cofactor.

It localises to the cytoplasm. The catalysed reaction is uridine(54) in tRNA + (6R)-5,10-methylene-5,6,7,8-tetrahydrofolate + NADH + H(+) = 5-methyluridine(54) in tRNA + (6S)-5,6,7,8-tetrahydrofolate + NAD(+). It catalyses the reaction uridine(54) in tRNA + (6R)-5,10-methylene-5,6,7,8-tetrahydrofolate + NADPH + H(+) = 5-methyluridine(54) in tRNA + (6S)-5,6,7,8-tetrahydrofolate + NADP(+). In terms of biological role, catalyzes the folate-dependent formation of 5-methyl-uridine at position 54 (M-5-U54) in all tRNAs. This chain is Methylenetetrahydrofolate--tRNA-(uracil-5-)-methyltransferase TrmFO, found in Citrifermentans bemidjiense (strain ATCC BAA-1014 / DSM 16622 / JCM 12645 / Bem) (Geobacter bemidjiensis).